The chain runs to 430 residues: Drebrin-like protein (430 aa).

The 130-residue stretch at 4–133 (NLSRNGPALQ…EPECIMEKVA (130 aa)) folds into the ADF-H domain. The residue at position 26 (threonine 26) is a Phosphothreonine. A phosphoserine mark is found at glycine 137 and serine 160. Position 176 is an N6-acetyllysine (lysine 176). The stretch at 176–231 (KDSFWAKAEKEEENRRLEEKRRAEEAQRQLEQERRERELREAARREQRYQEQGGEA) forms a coiled coil. Phosphoserine occurs at positions 183 and 232. A disordered region spans residues 219 to 283 (RREQRYQEQG…SSPQPGKLRS (65 aa)). Residues 233–244 (PQRTWEQQQEVV) are compositionally biased toward polar residues. Over residues 245–267 (SRNRNEQESAVHPREIFKQKERA) the composition is skewed to basic and acidic residues. The span at 268 to 277 (MSTTSISSPQ) shows a compositional bias: polar residues. 4 positions are modified to phosphoserine: serine 269, serine 272, serine 275, and serine 283. Lysine 288 is modified (N6-acetyllysine). The residue at position 291 (threonine 291) is a Phosphothreonine. Phosphotyrosine occurs at positions 334 and 344. The region spanning 371–430 (GQGLCARALYDYQAADDTEISFDPENLITGIEVIDEGWWRGYGPDGHFGMFPANYVELIE) is the SH3 domain.

It belongs to the ABP1 family. Interacts with SHANK2, SHANK3 and SYN1. Interacts with FGD1 and DNM1. Interacts with ANKRD54. Interacts with COBL. Interacts with WASL and WIPF1. Interacts with MAP4K1 and PRAM1. Post-translationally, degraded by caspases during apoptosis.

It is found in the cytoplasm. Its subcellular location is the cytoskeleton. The protein localises to the cell projection. It localises to the lamellipodium. The protein resides in the ruffle. It is found in the cell cortex. Its subcellular location is the cytosol. The protein localises to the synapse. It localises to the perikaryon. The protein resides in the neuron projection. It is found in the cell membrane. Its subcellular location is the cytoplasmic vesicle. The protein localises to the clathrin-coated vesicle membrane. It localises to the golgi apparatus membrane. The protein resides in the podosome. It is found in the early endosome. Its subcellular location is the dendrite. The protein localises to the postsynaptic density. Its function is as follows. Adapter protein that binds F-actin and DNM1, and thereby plays a role in receptor-mediated endocytosis. Plays a role in the reorganization of the actin cytoskeleton, formation of cell projections, such as neurites, in neuron morphogenesis and synapse formation via its interaction with WASL and COBL. Does not bind G-actin and promote actin polymerization by itself. Required for the formation of organized podosome rosettes. May act as a common effector of antigen receptor-signaling pathways in leukocytes. Acts as a key component of the immunological synapse that regulates T-cell activation by bridging TCRs and the actin cytoskeleton to gene activation and endocytic processes. This Homo sapiens (Human) protein is Drebrin-like protein (DBNL).